The following is a 114-amino-acid chain: uncharacterized protein (114 aa).

The next 2 helical transmembrane spans lie at 58-78 (CLLG…FFLL) and 94-114 (SISY…FCLA).

It is found in the membrane. This is an uncharacterized protein from Saccharomyces cerevisiae (strain ATCC 204508 / S288c) (Baker's yeast).